A 409-amino-acid polypeptide reads, in one-letter code: Indian hedgehog protein (409 aa).

Residues 1–23 (MQLPKVVLLLCAAALLLSGAVRG) form the signal peptide. Cysteine 24 carries N-palmitoyl cysteine lipidation. Glutamate 89, glutamate 90, aspartate 95, threonine 125, glutamate 126, aspartate 129, and aspartate 131 together coordinate Ca(2+). Residues histidine 140, aspartate 147, and histidine 182 each contribute to the Zn(2+) site. The Cholesterol glycine ester moiety is linked to residue glycine 197.

Belongs to the hedgehog family. As to quaternary structure, multimer. Interacts with BOC and CDON. Interacts with PTCH1. Interacts with glypican GPC3. Post-translationally, cholesterylation is required for N-product targeting to lipid rafts and multimerization. The C-terminal domain displays an autoproteolysis activity and a cholesterol transferase activity. Both activities result in the cleavage of the full-length protein and covalent attachment of a cholesterol moiety to the C-terminal of the newly generated N-product. The N-product is the active species in both local and long-range signaling, whereas the C-product is degraded in the endoplasmic reticulum. In terms of processing, N-palmitoylation by HHAT of N-product is required for indian hedgehog protein N-product multimerization and full activity. In terms of tissue distribution, expressed in the marginal zone at early gastrulation. At stage 14, expression begins in the neural plate with expression becoming more prominent in the anterodorsal area at neural tube closure. At this stage, also expressed diffusely in the somitic and pre-somitic mesoderm. By the early tadpole (stages 28-30), expression is widespread throughout anterior structures with highest levels in the otic vesicle, the eye, and the branchial arches.

It is found in the cell membrane. The protein resides in the endoplasmic reticulum membrane. The protein localises to the golgi apparatus membrane. Its subcellular location is the secreted. The enzyme catalyses glycyl-L-cysteinyl-[protein] + cholesterol + H(+) = [protein]-C-terminal glycyl cholesterol ester + N-terminal L-cysteinyl-[protein]. Functionally, signal involved in the early induction and patterning of anterodorsal ectoderm, nervous system and somites. Induces ectopic cement gland formation in embryos. It is involved in the regulation of endochondral skeleton formation, and the development of retinal pigment epithelium (RPE), photoreceptors and periocular tissues. The C-terminal part of the indian hedgehog protein precursor displays an autoproteolysis and a cholesterol transferase activity. Both activities result in the cleavage of the full-length protein into two parts followed by the covalent attachment of a cholesterol moiety to the C-terminal of the newly generated N-product. Both activities occur in the endoplasmic reticulum. Its function is as follows. The dually lipidated indian hedgehog protein N-product is a morphogen which is essential for a variety of patterning events during development. Binds to the patched (PTCH1) receptor, which functions in association with smoothened (SMO), to activate the transcription of target genes. Signal involved in the early induction and patterning of anterodorsal ectoderm, nervous system and somites. Induces ectopic cement gland formation in embryos. The sequence is that of Indian hedgehog protein from Xenopus laevis (African clawed frog).